The primary structure comprises 648 residues: cAMP-dependent protein kinase catalytic subunit (648 aa).

Low complexity-rich tracts occupy residues 1 to 20 (MSNS…TINN), 46 to 67 (SGNN…NSSG), 136 to 175 (QQQP…PQQQ), and 232 to 254 (NTPS…NPHT). Disordered stretches follow at residues 1-25 (MSNS…KVNV), 40-86 (GGGG…TKMD), 121-175 (KVPS…PQQQ), and 219-290 (QQQQ…DTNP). Positions 255–290 (SGLSLQHAHSSYTPSNVLHSPTHFQSSLPTRLDTNP) are enriched in polar residues. A Protein kinase domain is found at 336–590 (FKQIRVIGTG…ALDVKNHRWF (255 aa)). Residues 342–350 (IGTGTFGKV) and lysine 365 contribute to the ATP site. The active-site Proton acceptor is aspartate 459. Residue threonine 490 is modified to Phosphothreonine. In terms of domain architecture, AGC-kinase C-terminal spans 591-648 (SDINWERLYQRRDNGPFIPKIQHQGDSSNFEMYDEEEMVEEPPSSNYVDPYAHLFKDF).

It belongs to the protein kinase superfamily. AGC Ser/Thr protein kinase family. cAMP subfamily. As to quaternary structure, in Dictyostelium the holoenzyme is a dimer composed of a regulatory (R) and a catalytic (C) subunit. In the presence of cAMP it dissociates into the active C subunit and an R monomer.

The catalysed reaction is L-seryl-[protein] + ATP = O-phospho-L-seryl-[protein] + ADP + H(+). It carries out the reaction L-threonyl-[protein] + ATP = O-phospho-L-threonyl-[protein] + ADP + H(+). In terms of biological role, essential for differentiation and fruit morphogenesis. This chain is cAMP-dependent protein kinase catalytic subunit (pkaC), found in Dictyostelium discoideum (Social amoeba).